Here is a 72-residue protein sequence, read N- to C-terminus: Brevinin-2SN4 (72 aa).

A signal peptide spans 1–22 (MFTMKKPMLLLFFLGMISMSLC). Positions 23 to 40 (QDERGADEDDGGEMTEEE) are cleaved as a propeptide — removed in mature form. Cys-66 and Cys-72 are joined by a disulfide.

The protein belongs to the frog skin active peptide (FSAP) family. Brevinin subfamily. Expressed by the skin glands.

Its subcellular location is the secreted. Functionally, antimicrobial peptide. Active against a variety of Gram-negative and Gram-positive bacterial strains. Not active against fungi. Shows very weak hemolytic activity against human erythrocytes. The sequence is that of Brevinin-2SN4 from Sylvirana spinulosa (Fine-spined frog).